The primary structure comprises 74 residues: Defensin J1-2 (74 aa).

A signal peptide spans 1–27; that stretch reads MAGFSKVIATIFLMMMLVFATGMVAEA. 4 disulfides stabilise this stretch: cysteine 30/cysteine 74, cysteine 41/cysteine 61, cysteine 47/cysteine 68, and cysteine 51/cysteine 70.

Belongs to the DEFL family. As to quaternary structure, monomer. Expressed in flowers and in young fruits.

It is found in the secreted. Its function is as follows. Plant defense peptide with antifungal activity against F.oxysporum and B.cinerea. The chain is Defensin J1-2 from Capsicum annuum (Capsicum pepper).